A 606-amino-acid polypeptide reads, in one-letter code: Kelch repeat and BTB domain-containing protein 8 (606 aa).

The 69-residue stretch at 55–123 (TDIVVQVDHG…AYTSRVQLTE (69 aa)) folds into the BTB domain. Positions 158 to 258 (CIGVFSFADH…PLMEETFVEQ (101 aa)) constitute a BACK domain. Kelch repeat units lie at residues 342 to 396 (ELYI…HCCG), 397 to 447 (KLYA…EYKD), 449 to 487 (IYIL…VYKD), 488 to 534 (SIYY…KLVV), and 546 to 593 (TQVS…FECA).

Belongs to the KBTBD8 family. In terms of assembly, component of the BCR(KBTBD8) E3 ubiquitin ligase complex.

It is found in the cytoplasm. Its subcellular location is the cytoskeleton. The protein resides in the spindle. It localises to the golgi apparatus. Functionally, substrate-specific adapter of a BCR (BTB-CUL3-RBX1) E3 ubiquitin ligase complex that acts as a regulator of neural crest specification. The BCR(KBTBD8) complex acts by mediating monoubiquitination of target proteins. The sequence is that of Kelch repeat and BTB domain-containing protein 8 (kbtbd8) from Xenopus tropicalis (Western clawed frog).